We begin with the raw amino-acid sequence, 1065 residues long: Putative guanine nucleotide-exchange factor SED4 (1065 aa).

Residues 1-346 (MSGNSANYDV…SSSILRNIWK (346 aa)) lie on the Cytoplasmic side of the membrane. Ser65 carries the phosphoserine modification. 2 WD repeats span residues 259–298 (FDLNGITSMDVSPNKKFVALSSNDNLVAIVSVEKLKLVQL) and 302–341 (VHESTITKVTFSPDSRYLASTSMGNTINVLKLSGTSSSIL). The chain crosses the membrane as a helical; Signal-anchor for type II membrane protein span at residues 347–365 (FFLNFVLLVVLAGAIQLGY). Topologically, residues 366-1065 (KHNVHGFIYK…VNYAGLHDEL (700 aa)) are lumenal. Asn388 carries an N-linked (GlcNAc...) asparagine glycan. Disordered stretches follow at residues 458–477 (TSADIPTSASSSSSSSSSSF), 482–520 (VTNEPIVSSPTSEITKPLASPTEPNIVEKPSLPLNSESI), and 551–625 (QSES…SFLD). The span at 465–476 (SASSSSSSSSSS) shows a compositional bias: low complexity. The segment covering 482-495 (VTNEPIVSSPTSEI) has biased composition (polar residues). Over residues 568 to 621 (STESPSLSHMPSSSSSSLSLSSSLTTSPTTALSTSTATAVTTTQTNPTNDAANT) the composition is skewed to low complexity. Asn620 carries an N-linked (GlcNAc...) asparagine glycan. Repeat copies occupy residues 824–833 (IDNSEYTSVL), 834–843 (ADNLEPTSVL), 844–853 (ADNSEPTSVL), and 854–863 (ADSSEPTSVF). Residues 824–863 (IDNSEYTSVLADNLEPTSVLADNSEPTSVLADSSEPTSVF) are 4 X 10 AA tandem repeats. N-linked (GlcNAc...) asparagine glycosylation occurs at Asn1039. The short motif at 1062–1065 (HDEL) is the Prevents secretion from ER element.

This sequence belongs to the WD repeat SEC12 family.

It localises to the endoplasmic reticulum membrane. It is found in the golgi apparatus membrane. Putative guanine nucleotide-exchange factor (GEF) involved in the formation or budding of transport vesicles from the ER. Positive regulator of SAR1 probably through inhibition of the GTPase activation by SEC23. The polypeptide is Putative guanine nucleotide-exchange factor SED4 (SED4) (Saccharomyces cerevisiae (strain ATCC 204508 / S288c) (Baker's yeast)).